We begin with the raw amino-acid sequence, 358 residues long: Plancitoxin-1 (358 aa).

The first 26 residues, 1–26 (MPSSVIMFTFLALTVLTAVMVGTSEA), serve as a signal peptide directing secretion. Asn274 carries N-linked (GlcNAc...) asparagine glycosylation. Residue His303 is part of the active site.

Belongs to the DNase II family. As to quaternary structure, plancitoxin is a heterodimer of alpha and beta subunits; disulfide-linked by a single disulfide bond. As to expression, venom gland.

The protein resides in the secreted. The catalysed reaction is Endonucleolytic cleavage to nucleoside 3'-phosphates and 3'-phosphooligonucleotide end-products.. Functionally, hydrolyzes DNA with an optimum pH of 7.2. Is potently hepatotoxic. It induces caspase-independent apoptosis (on rat liver cells) through the following procedure: binding to a specific receptor in the cytoplasmic membrane, entering the cell, entering the nucleus and degrading DNA. In Acanthaster planci (Crown-of-thorns starfish), this protein is Plancitoxin-1.